A 244-amino-acid polypeptide reads, in one-letter code: UPF0280 protein Mhun_0136 (244 aa).

Belongs to the UPF0280 family.

The polypeptide is UPF0280 protein Mhun_0136 (Methanospirillum hungatei JF-1 (strain ATCC 27890 / DSM 864 / NBRC 100397 / JF-1)).